The sequence spans 102 residues: Small ribosomal subunit protein uS10 (102 aa).

This sequence belongs to the universal ribosomal protein uS10 family. As to quaternary structure, part of the 30S ribosomal subunit.

In terms of biological role, involved in the binding of tRNA to the ribosomes. In Thermotoga neapolitana (strain ATCC 49049 / DSM 4359 / NBRC 107923 / NS-E), this protein is Small ribosomal subunit protein uS10.